The chain runs to 189 residues: Elongation factor P (189 aa).

Lys34 is modified (N6-(3,6-diaminohexanoyl)-5-hydroxylysine).

This sequence belongs to the elongation factor P family. In terms of processing, may be beta-lysylated on the epsilon-amino group of Lys-34 by the combined action of EpmA and EpmB, and then hydroxylated on the C5 position of the same residue by EpmC (if this protein is present). Lysylation is critical for the stimulatory effect of EF-P on peptide-bond formation. The lysylation moiety may extend toward the peptidyltransferase center and stabilize the terminal 3-CCA end of the tRNA. Hydroxylation of the C5 position on Lys-34 may allow additional potential stabilizing hydrogen-bond interactions with the P-tRNA.

It is found in the cytoplasm. Its pathway is protein biosynthesis; polypeptide chain elongation. Involved in peptide bond synthesis. Alleviates ribosome stalling that occurs when 3 or more consecutive Pro residues or the sequence PPG is present in a protein, possibly by augmenting the peptidyl transferase activity of the ribosome. Modification of Lys-34 is required for alleviation. In Francisella philomiragia subsp. philomiragia (strain ATCC 25017 / CCUG 19701 / FSC 153 / O#319-036), this protein is Elongation factor P.